Here is a 257-residue protein sequence, read N- to C-terminus: 5'-nucleotidase SurE (257 aa).

A divalent metal cation is bound by residues Asp-8, Asp-9, Ser-40, and Asn-92.

It belongs to the SurE nucleotidase family. A divalent metal cation is required as a cofactor.

Its subcellular location is the cytoplasm. The catalysed reaction is a ribonucleoside 5'-phosphate + H2O = a ribonucleoside + phosphate. In terms of biological role, nucleotidase that shows phosphatase activity on nucleoside 5'-monophosphates. The sequence is that of 5'-nucleotidase SurE from Rhizobium etli (strain ATCC 51251 / DSM 11541 / JCM 21823 / NBRC 15573 / CFN 42).